Here is a 478-residue protein sequence, read N- to C-terminus: Isoeugenol monooxygenase (478 aa).

Fe cation is bound by residues His167, His218, His282, and His471.

Belongs to the carotenoid oxygenase family. Fe(2+) serves as cofactor.

It catalyses the reaction (E)-isoeugenol + O2 = vanillin + acetaldehyde. Its activity is regulated as follows. Inhibited by Co(2+), Ni(2+) and Zn(2+), which may inhibit enzyme activity by replacing iron in the catalytic residues. Inhibited by incubation with high concentrations of the iron chelators 1,10-phenanthroline and Tiron. However, iron is not completely removed by the chelators, suggesting that iron is tightly bound to the enzyme. Functionally, involved in isoeugenol degradation. Catalyzes the oxidative cleavage of the side chain double-bond of isoeugenol to form vanillin and acetaldehyde. The protein is Isoeugenol monooxygenase of Pseudomonas nitroreducens.